The chain runs to 476 residues: Cytosolic iron-sulfur assembly component 3 (476 aa).

Ala-2 carries the N-acetylalanine modification. Positions 24, 71, 74, 77, 190, and 246 each coordinate [4Fe-4S] cluster. A disordered region spans residues 297 to 316 (DGLTSSVSAEEPSSHRGGGS). [4Fe-4S] cluster is bound by residues Cys-395 and Cys-399.

This sequence belongs to the NARF family. In terms of assembly, external component of the CIA complex. In the CIA complex, interacts directly with CIAO1 and MMS19.

Functionally, component of the cytosolic iron-sulfur protein assembly (CIA) complex, a multiprotein complex that mediates the incorporation of iron-sulfur cluster into extramitochondrial Fe/S proteins. Seems to negatively regulate the level of HIF1A expression, although this effect could be indirect. The chain is Cytosolic iron-sulfur assembly component 3 (Ciao3) from Mus musculus (Mouse).